The primary structure comprises 286 residues: Putative L-ribulose-5-phosphate 3-epimerase SgbU (286 aa).

This sequence belongs to the L-ribulose-5-phosphate 3-epimerase family.

It catalyses the reaction L-ribulose 5-phosphate = L-xylulose 5-phosphate. Functionally, catalyzes the isomerization of L-xylulose-5-phosphate to L-ribulose-5-phosphate (Potential). May be involved in the utilization of 2,3-diketo-L-gulonate. This Escherichia coli (strain K12) protein is Putative L-ribulose-5-phosphate 3-epimerase SgbU (sgbU).